We begin with the raw amino-acid sequence, 103 residues long: Pyrimidine/purine nucleoside phosphorylase (103 aa).

The protein belongs to the nucleoside phosphorylase PpnP family.

The catalysed reaction is a purine D-ribonucleoside + phosphate = a purine nucleobase + alpha-D-ribose 1-phosphate. It catalyses the reaction adenosine + phosphate = alpha-D-ribose 1-phosphate + adenine. It carries out the reaction cytidine + phosphate = cytosine + alpha-D-ribose 1-phosphate. The enzyme catalyses guanosine + phosphate = alpha-D-ribose 1-phosphate + guanine. The catalysed reaction is inosine + phosphate = alpha-D-ribose 1-phosphate + hypoxanthine. It catalyses the reaction thymidine + phosphate = 2-deoxy-alpha-D-ribose 1-phosphate + thymine. It carries out the reaction uridine + phosphate = alpha-D-ribose 1-phosphate + uracil. The enzyme catalyses xanthosine + phosphate = alpha-D-ribose 1-phosphate + xanthine. Its function is as follows. Catalyzes the phosphorolysis of diverse nucleosides, yielding D-ribose 1-phosphate and the respective free bases. Can use uridine, adenosine, guanosine, cytidine, thymidine, inosine and xanthosine as substrates. Also catalyzes the reverse reactions. The chain is Pyrimidine/purine nucleoside phosphorylase from Shewanella oneidensis (strain ATCC 700550 / JCM 31522 / CIP 106686 / LMG 19005 / NCIMB 14063 / MR-1).